The following is a 175-amino-acid chain: Alkyl hydroperoxide reductase AhpD (175 aa).

The active-site Proton donor is the cysteine 131. A disulfide bridge connects residues cysteine 131 and cysteine 134. Catalysis depends on cysteine 134, which acts as the Cysteine sulfenic acid (-SOH) intermediate.

Belongs to the AhpD family.

It catalyses the reaction N(6)-[(R)-dihydrolipoyl]-L-lysyl-[lipoyl-carrier protein] + a hydroperoxide = N(6)-[(R)-lipoyl]-L-lysyl-[lipoyl-carrier protein] + an alcohol + H2O. Its function is as follows. Antioxidant protein with alkyl hydroperoxidase activity. Required for the reduction of the AhpC active site cysteine residues and for the regeneration of the AhpC enzyme activity. The chain is Alkyl hydroperoxide reductase AhpD from Brucella melitensis biotype 1 (strain ATCC 23456 / CCUG 17765 / NCTC 10094 / 16M).